We begin with the raw amino-acid sequence, 142 residues long: uncharacterized protein (142 aa).

The helical transmembrane segment at 75 to 91 (YAAILAQVSFAFLCTGF) threads the bilayer.

Its subcellular location is the membrane. This is an uncharacterized protein from Haemophilus influenzae (strain ATCC 51907 / DSM 11121 / KW20 / Rd).